An 806-amino-acid polypeptide reads, in one-letter code: Leucine--tRNA ligase (806 aa).

The 'HIGH' region signature appears at 40-51; the sequence is PYPSGQGLHVGH. Residues 578 to 582 carry the 'KMSKS' region motif; sequence KMSKS. An ATP-binding site is contributed by Lys-581.

The protein belongs to the class-I aminoacyl-tRNA synthetase family.

The protein resides in the cytoplasm. It carries out the reaction tRNA(Leu) + L-leucine + ATP = L-leucyl-tRNA(Leu) + AMP + diphosphate. The sequence is that of Leucine--tRNA ligase from Limosilactobacillus reuteri (strain DSM 20016) (Lactobacillus reuteri).